We begin with the raw amino-acid sequence, 152 residues long: Transcriptional repressor NrdR (152 aa).

Residues 3 to 34 (CPYCNASDTKVIDSRLAAEGAQVRRRRSCNSC) fold into a zinc finger. The ATP-cone domain maps to 49–139 (PRIIKSSGKI…VYRDFQDIDA (91 aa)).

This sequence belongs to the NrdR family. The cofactor is Zn(2+).

Negatively regulates transcription of bacterial ribonucleotide reductase nrd genes and operons by binding to NrdR-boxes. The chain is Transcriptional repressor NrdR from Psychrobacter arcticus (strain DSM 17307 / VKM B-2377 / 273-4).